We begin with the raw amino-acid sequence, 112 residues long: CLAVATA3/ESR (CLE)-related protein 44 (112 aa).

The signal sequence occupies residues 1-39 (MATTIDQTSIKSLHFHQVIRLIITIIFLAFLFLIGPTSS). The segment at 41 to 112 (NHHLHESSSK…VPSGPNPISN (72 aa)) is disordered. Polar residues predominate over residues 62–71 (QPSTPSSSTM). Hydroxyproline occurs at positions 104 and 107. The O-linked (Ara...) hydroxyproline glycan is linked to Pro-107.

This sequence belongs to the CLV3/ESR signal peptide family. In terms of assembly, interacts specifically with the leucine-rich repeat receptor-like protein kinase TDR, especially in the presence of SERK2. The O-glycosylation (arabinosylation) of the hydroxyproline Pro-107 enhances binding affinity of the CLE44p peptide for its receptor. Mostly expressed in flowers and leaves. Widely expressed along the vascular strands. In roots and hypocotyls, present in endodermal cells as well as cells in the phloem and the adjacent pericycle.

The protein resides in the secreted. It is found in the extracellular space. Extracellular signal peptide that regulates cell fate. May act with TDR as a ligand-receptor pair in a signal transduction pathway that represses tracheary element differentiation but promotes the formation of procambial cells adjacent to phloem cells in the veins. Regulates the transition of protophloem cells from proliferation to differentiation, thus impinging on postembryonic growth capacity of the root meristem; this signaling pathway requires CRN and CLV2. The protein is CLAVATA3/ESR (CLE)-related protein 44 of Arabidopsis thaliana (Mouse-ear cress).